A 282-amino-acid chain; its full sequence is Pantothenate synthetase (282 aa).

Residue 30-37 (MGYLHEGH) coordinates ATP. The active-site Proton donor is the H37. Residue Q61 participates in (R)-pantoate binding. Residue Q61 coordinates beta-alanine. ATP is bound at residue 147 to 150 (GQKD). (R)-pantoate is bound at residue Q153. Residues V176 and 184–187 (LSSR) each bind ATP.

This sequence belongs to the pantothenate synthetase family. Homodimer.

It localises to the cytoplasm. It catalyses the reaction (R)-pantoate + beta-alanine + ATP = (R)-pantothenate + AMP + diphosphate + H(+). It participates in cofactor biosynthesis; (R)-pantothenate biosynthesis; (R)-pantothenate from (R)-pantoate and beta-alanine: step 1/1. Its function is as follows. Catalyzes the condensation of pantoate with beta-alanine in an ATP-dependent reaction via a pantoyl-adenylate intermediate. The chain is Pantothenate synthetase from Desulfitobacterium hafniense (strain DSM 10664 / DCB-2).